The primary structure comprises 292 residues: Putative OX-2 membrane glycoprotein homolog (292 aa).

The first 18 residues, 1 to 18 (MSPLMLRLLPLLCIIISA), serve as a signal peptide directing secretion. The region spanning 24–136 (PETSPSLVYE…TFTVDNEKTS (113 aa)) is the Ig-like V-type domain. A disulfide bridge links Cys-42 with Cys-126. N-linked (GlcNAc...) asparagine; by host glycans are attached at residues Asn-45, Asn-57, Asn-72, and Asn-195. Residues 147-237 (PIVVLYFRYL…TNQKASALVT (91 aa)) form the Ig-like C2-type domain. The helical transmembrane segment at 263–283 (VFTWIVPLILILIISVMVLLI) threads the bilayer.

It localises to the host membrane. The polypeptide is Putative OX-2 membrane glycoprotein homolog (U85) (Human herpesvirus 6B (strain Z29) (HHV-6 variant B)).